The chain runs to 122 residues: Acidic phospholipase A2 CbIalpha (122 aa).

7 cysteine pairs are disulfide-bonded: Cys-26–Cys-115, Cys-28–Cys-44, Cys-43–Cys-95, Cys-49–Cys-122, Cys-50–Cys-88, Cys-57–Cys-81, and Cys-75–Cys-86. Ca(2+) is bound by residues Tyr-27, Gly-29, and Gly-31. The active site involves His-47. Asp-48 is a binding site for Ca(2+). The active site involves Asp-89.

The protein belongs to the phospholipase A2 family. Group II subfamily. D49 sub-subfamily. As to quaternary structure, heterodimer of an acidic subunit (CbIalpha or CbIbeta) and a basic subunit (CbII). The acidic subunit is non-toxic, and increases the toxicity of the basic subunit. It depends on Ca(2+) as a cofactor. As to expression, expressed by the venom gland.

The protein resides in the secreted. The catalysed reaction is a 1,2-diacyl-sn-glycero-3-phosphocholine + H2O = a 1-acyl-sn-glycero-3-phosphocholine + a fatty acid + H(+). Heterodimer: presynaptic neurotoxin. Functionally, monomer: Snake venom phospholipase A2 (PLA2) is inactive towards micellar phosphatidylcholine but is weakly active towards non-micellar dithiolecithin. PLA2 catalyzes the calcium-dependent hydrolysis of the 2-acyl groups in 3-sn-phosphoglycerides. In Pseudocerastes fieldi (Field's horned viper), this protein is Acidic phospholipase A2 CbIalpha.